The chain runs to 213 residues: Protein GrpE (213 aa).

Residues 1–23 (MSDEKKPEAETSESLQKREEKLA) are compositionally biased toward basic and acidic residues. The disordered stretch occupies residues 1 to 43 (MSDEKKPEAETSESLQKREEKLAETLASEPAAQGEAEDAAAAG). Over residues 29–43 (EPAAQGEAEDAAAAG) the composition is skewed to low complexity.

It belongs to the GrpE family. As to quaternary structure, homodimer.

The protein resides in the cytoplasm. Participates actively in the response to hyperosmotic and heat shock by preventing the aggregation of stress-denatured proteins, in association with DnaK and GrpE. It is the nucleotide exchange factor for DnaK and may function as a thermosensor. Unfolded proteins bind initially to DnaJ; upon interaction with the DnaJ-bound protein, DnaK hydrolyzes its bound ATP, resulting in the formation of a stable complex. GrpE releases ADP from DnaK; ATP binding to DnaK triggers the release of the substrate protein, thus completing the reaction cycle. Several rounds of ATP-dependent interactions between DnaJ, DnaK and GrpE are required for fully efficient folding. This chain is Protein GrpE, found in Parvibaculum lavamentivorans (strain DS-1 / DSM 13023 / NCIMB 13966).